A 167-amino-acid polypeptide reads, in one-letter code: UPF0114 protein Tola_1474 (167 aa).

The next 4 membrane-spanning stretches (helical) occupy residues 15 to 35 (IMAP…IKFF), 53 to 73 (LILI…IVMV), 109 to 129 (VAAS…MNTE), and 136 to 156 (IKWY…MGYL).

The protein belongs to the UPF0114 family.

The protein localises to the cell membrane. The chain is UPF0114 protein Tola_1474 from Tolumonas auensis (strain DSM 9187 / NBRC 110442 / TA 4).